The chain runs to 236 residues: Large ribosomal subunit protein uL3 (236 aa).

Disordered regions lie at residues 132-153 (SNRASHGNSRSHNVPGSIGMAQ) and 200-236 (KGGDVTVSPSIRSARPTNNGNVNAAAKGGAKSGKKGG). A compositionally biased stretch (polar residues) spans 133–145 (NRASHGNSRSHNV). The residue at position 153 (Q153) is an N5-methylglutamine. Polar residues predominate over residues 206 to 216 (VSPSIRSARPT). The span at 217 to 228 (NNGNVNAAAKGG) shows a compositional bias: low complexity.

It belongs to the universal ribosomal protein uL3 family. Part of the 50S ribosomal subunit. Forms a cluster with proteins L14 and L19. Post-translationally, methylated by PrmB.

Functionally, one of the primary rRNA binding proteins, it binds directly near the 3'-end of the 23S rRNA, where it nucleates assembly of the 50S subunit. The polypeptide is Large ribosomal subunit protein uL3 (Nitrosospira multiformis (strain ATCC 25196 / NCIMB 11849 / C 71)).